The following is a 1158-amino-acid chain: Hephaestin (1158 aa).

The N-terminal stretch at 1-23 (MESGHLLWALLFMQSLWPQLTDG) is a signal peptide. Plastocyanin-like domains are found at residues 24–206 (ATRV…LITC), 218–366 (QRQD…VKSC), 370–560 (PPVD…LLVC), 570–718 (KQKG…VSQC), 731–903 (AARI…LAIC), and 911–1067 (HGGR…SRTE). Residues 24 to 1110 (ATRVYYLGIR…PIKNVEMLAS (1087 aa)) are Extracellular-facing. G70 and Y73 together coordinate Na(+). Cu(2+) is bound by residues H126 and H128. An O2-binding site is contributed by H126. Ca(2+) contacts are provided by K134, D152, and D153. N-linked (GlcNAc...) asparagine glycosylation is present at N164. C180 and C206 are joined by a disulfide. Cu(2+) contacts are provided by H186 and H188. H186 contributes to the O2 binding site. N-linked (GlcNAc...) asparagine glycosylation is present at N236. S265 contacts Na(+). C285 and C366 are joined by a disulfide. Cu(2+)-binding residues include H304, C347, and H352. Positions 416, 425, and 428 each coordinate Na(+). A disulfide bridge links C534 with C560. N588 is a glycosylation site (N-linked (GlcNAc...) asparagine). S617 serves as a coordination point for Na(+). A disulfide bridge links C637 with C718. The Cu(2+) site is built by H656, C699, H704, and M709. Residues N714 and N758 are each glycosylated (N-linked (GlcNAc...) asparagine). Residues F769 and G778 each contribute to the Na(+) site. N-linked (GlcNAc...) asparagine glycans are attached at residues N829 and N873. Cysteines 877 and 903 form a disulfide. An N-linked (GlcNAc...) asparagine glycan is attached at N931. 8 residues coordinate Cu(2+): H1000, H1003, H1005, H1045, C1046, H1047, H1051, and M1056. O2 contacts are provided by H1003 and H1005. Position 1047 (H1047) interacts with O2. Residues 1111 to 1131 (VLVAISVTLLLVVLALGGVVW) form a helical membrane-spanning segment. Topologically, residues 1132 to 1158 (YQHRQRKLRRNRRSILDDSFKLLSFKQ) are cytoplasmic. Phosphoserine is present on residues S1145, S1150, and S1155.

It belongs to the multicopper oxidase family. In terms of assembly, part of a complex composed of SLC40A1/ferroportin, TF/transferrin and HEPH/hephaestin that transfers iron from cells to transferrin. Cu cation is required as a cofactor. Expressed by intestinal absorptive cells (at protein level). Also detected in breast, colon, bone trabecular cells and fibroblasts.

The protein localises to the basolateral cell membrane. The catalysed reaction is 4 Fe(2+) + O2 + 4 H(+) = 4 Fe(3+) + 2 H2O. In terms of biological role, plasma membrane ferroxidase that mediates the extracellular conversion of ferrous/Fe(2+) iron into its ferric/Fe(3+) form. Couples ferroportin which specifically exports ferrous/Fe(2+) iron from cells to transferrin that only binds and shuttles extracellular ferric/Fe(3+) iron throughout the body. By helping iron transfer from cells to blood mainly contributes to dietary iron absorption by the intestinal epithelium and more generally regulates iron levels in the body. This chain is Hephaestin, found in Homo sapiens (Human).